Consider the following 399-residue polypeptide: S-adenosylmethionine synthase (399 aa).

Position 19 (His-19) interacts with ATP. Asp-21 is a Mg(2+) binding site. Glu-47 contributes to the K(+) binding site. Glu-60 and Gln-103 together coordinate L-methionine. Residues 103–113 are flexible loop; the sequence is QSPDIAQGVNQ. ATP contacts are provided by residues 179–181, 246–247, Asp-255, 261–262, Ala-278, and Lys-282; these read DGK, RF, and RK. Asp-255 is an L-methionine binding site. Lys-286 lines the L-methionine pocket.

Belongs to the AdoMet synthase family. In terms of assembly, homotetramer; dimer of dimers. Mg(2+) is required as a cofactor. Requires K(+) as cofactor.

It is found in the cytoplasm. It catalyses the reaction L-methionine + ATP + H2O = S-adenosyl-L-methionine + phosphate + diphosphate. It functions in the pathway amino-acid biosynthesis; S-adenosyl-L-methionine biosynthesis; S-adenosyl-L-methionine from L-methionine: step 1/1. Its function is as follows. Catalyzes the formation of S-adenosylmethionine (AdoMet) from methionine and ATP. The overall synthetic reaction is composed of two sequential steps, AdoMet formation and the subsequent tripolyphosphate hydrolysis which occurs prior to release of AdoMet from the enzyme. This is S-adenosylmethionine synthase from Halalkalibacterium halodurans (strain ATCC BAA-125 / DSM 18197 / FERM 7344 / JCM 9153 / C-125) (Bacillus halodurans).